The primary structure comprises 98 residues: Large ribosomal subunit protein uL23 (98 aa).

It belongs to the universal ribosomal protein uL23 family. Part of the 50S ribosomal subunit. Contacts protein L29, and trigger factor when it is bound to the ribosome.

In terms of biological role, one of the early assembly proteins it binds 23S rRNA. One of the proteins that surrounds the polypeptide exit tunnel on the outside of the ribosome. Forms the main docking site for trigger factor binding to the ribosome. This chain is Large ribosomal subunit protein uL23, found in Lactobacillus delbrueckii subsp. bulgaricus (strain ATCC 11842 / DSM 20081 / BCRC 10696 / JCM 1002 / NBRC 13953 / NCIMB 11778 / NCTC 12712 / WDCM 00102 / Lb 14).